A 283-amino-acid polypeptide reads, in one-letter code: Bifunctional protein FolD (283 aa).

Residues 166 to 168 (GRS), S191, and I232 each bind NADP(+).

This sequence belongs to the tetrahydrofolate dehydrogenase/cyclohydrolase family. In terms of assembly, homodimer.

It catalyses the reaction (6R)-5,10-methylene-5,6,7,8-tetrahydrofolate + NADP(+) = (6R)-5,10-methenyltetrahydrofolate + NADPH. The catalysed reaction is (6R)-5,10-methenyltetrahydrofolate + H2O = (6R)-10-formyltetrahydrofolate + H(+). It functions in the pathway one-carbon metabolism; tetrahydrofolate interconversion. Functionally, catalyzes the oxidation of 5,10-methylenetetrahydrofolate to 5,10-methenyltetrahydrofolate and then the hydrolysis of 5,10-methenyltetrahydrofolate to 10-formyltetrahydrofolate. This chain is Bifunctional protein FolD, found in Rickettsia bellii (strain RML369-C).